We begin with the raw amino-acid sequence, 470 residues long: E3 ubiquitin-protein ligase TRAIP (470 aa).

The segment at 7 to 50 adopts an RING-type; atypical zinc-finger fold; that stretch reads CTICSDFFDHSRDVAAIHCGHTFHLQCLIQWFETAPSRTCPQCR. Residues 76–277 adopt a coiled-coil conformation; that stretch reads AEFLKNELDS…RKKLMILQGT (202 aa). Positions 211–470 are interaction with CYLD; that stretch reads LKEARKATGE…QPKLDTFLCQ (260 aa). A PIP-box motif is present at residues 461-470; it reads QPKLDTFLCQ.

This sequence belongs to the TRAIP family. As to quaternary structure, interacts (via PIP-box) with PCNA. Binds TRAF1, TRAF2, TRAF3, TRAF5 and TRAF6 is part of the receptor-TRAF signaling complex. May interact with CYLD; the C-terminus interacts with CYLD, however the interaction was not detected with the full-length protein. Interacts with POLK and POLN. Interacts with UIMC1. Autoubiquitinated. Post-translationally, sumoylated; sumoylation is required for nuclear localization. Sumoylation increases protein stability, possibly by preventing ubiquitination. Detected in testis and thymus, and at lower levels in spleen.

It is found in the nucleus. The protein resides in the nucleoplasm. It localises to the nucleolus. The protein localises to the chromosome. Its subcellular location is the cytoplasm. It is found in the perinuclear region. The enzyme catalyses S-ubiquitinyl-[E2 ubiquitin-conjugating enzyme]-L-cysteine + [acceptor protein]-L-lysine = [E2 ubiquitin-conjugating enzyme]-L-cysteine + N(6)-ubiquitinyl-[acceptor protein]-L-lysine.. Its pathway is protein modification; protein ubiquitination. In terms of biological role, E3 ubiquitin ligase required to protect genome stability in response to replication stress. Acts as a key regulator of interstrand cross-link repair, which takes place when both strands of duplex DNA are covalently tethered together, thereby blocking replication and transcription. During mitosis, controls the choice between the two pathways of replication-coupled interstrand-cross-link repair by mediating ubiquitination of MCM7 subunit of the CMG helicase complex. Short ubiquitin chains on MCM7 promote recruitment of DNA glycosylase NEIL3. If the interstrand cross-link cannot be cleaved by NEIL3, the ubiquitin chains continue to grow on MCM7, promoting the unloading of the CMG helicase complex by the VCP/p97 ATPase, enabling the Fanconi anemia DNA repair pathway. Only catalyzes ubiquitination of MCM7 when forks converge. Also involved in the repair of covalent DNA-protein cross-links (DPCs) during DNA synthesis: promotes ubiquitination of DPCs, leading to their degradation by the proteasome. Has also been proposed to play a role in promoting translesion synthesis by mediating the assembly of 'Lys-63'-linked poly-ubiquitin chains on the Y-family polymerase POLN in order to facilitate bypass of DNA lesions and preserve genomic integrity. The function in translesion synthesis is however controversial. Acts as a regulator of the spindle assembly checkpoint. Also acts as a negative regulator of innate immune signaling by inhibiting activation of NF-kappa-B mediated by TNF. Negatively regulates TLR3/4- and RIG-I-mediated IRF3 activation and subsequent IFNB1 production and cellular antiviral response by promoting 'Lys-48'-linked polyubiquitination of TNK1 leading to its proteasomal degradation. The sequence is that of E3 ubiquitin-protein ligase TRAIP from Mus musculus (Mouse).